A 129-amino-acid chain; its full sequence is Small ribosomal subunit protein uS11 (129 aa).

The protein belongs to the universal ribosomal protein uS11 family. As to quaternary structure, part of the 30S ribosomal subunit. Interacts with proteins S7 and S18. Binds to IF-3.

In terms of biological role, located on the platform of the 30S subunit, it bridges several disparate RNA helices of the 16S rRNA. Forms part of the Shine-Dalgarno cleft in the 70S ribosome. This Parvibaculum lavamentivorans (strain DS-1 / DSM 13023 / NCIMB 13966) protein is Small ribosomal subunit protein uS11.